The chain runs to 326 residues: Toluene-4-monooxygenase system, ferredoxin--NAD(+) reductase component (326 aa).

Positions 1-92 constitute a 2Fe-2S ferredoxin-type domain; it reads MFNIQSDDLL…DLKIKVINRA (92 aa). 4 residues coordinate [2Fe-2S] cluster: C36, C41, C44, and C76. The segment at 95-326 is ferredoxin-reductase; the sequence is RASHPPKRFS…FEAIHFDRFF (232 aa). Residues 100–195 enclose the FAD-binding FR-type domain; sequence PKRFSTRVVS…DGPYGLSVLK (96 aa). FAD contacts are provided by residues 146 to 149, 162 to 164, and 170 to 172; these read RAYS, IVK, and KVS.

Belongs to the bacterial ring-hydroxylating dioxygenase ferredoxin reductase family. Monomer. The alkene monooxygenase multicomponent enzyme system is composed of an electron transfer component and a monooxygenase component interacting with the effector protein TmoD. The electron transfer component is composed of a ferredoxin reductase (TmoF) and a ferredoxin (TmoC), and the monooxygenase component is formed by a heterohexamer (dimer of heterotrimers) of two alpha subunits (TmoA), two beta subunits (TmoE) and two gamma subunits (TmoB). FAD serves as cofactor. [2Fe-2S] cluster is required as a cofactor.

It catalyses the reaction 2 reduced [2Fe-2S]-[ferredoxin] + NAD(+) + H(+) = 2 oxidized [2Fe-2S]-[ferredoxin] + NADH. The protein operates within xenobiotic degradation; toluene degradation. In terms of biological role, reductase component of the toluene-4-monooxygenase multicomponent enzyme system which catalyzes the O2- and NADH-dependent hydroxylation of toluene to form p-cresol. Ferredoxin reductase catalyzes the transfer of electrons from NADH to ferredoxin (TmoC). The protein is Toluene-4-monooxygenase system, ferredoxin--NAD(+) reductase component of Ectopseudomonas mendocina (Pseudomonas mendocina).